The following is a 2224-amino-acid chain: Coagulation factor V (2224 aa).

The signal sequence occupies residues 1 to 28 (MFPGCPRLWVLVVLGTSWVGWGSQGTEA). Plastocyanin-like domains follow at residues 30–193 (QLRQ…LLIC), 203–329 (TQKT…IKNC), 348–526 (KRWE…LLIC), and 536–684 (IQRA…DVKC). 2 F5/8 type A domains span residues 30 to 329 (QLRQ…IKNC) and 348 to 684 (KRWE…DVKC). Residues asparagine 51 and asparagine 55 are each glycosylated (N-linked (GlcNAc...) asparagine). Residues aspartate 139 and aspartate 140 each contribute to the Ca(2+) site. Cysteine 167 and cysteine 193 are oxidised to a cystine. N-linked (GlcNAc...) asparagine glycosylation is found at asparagine 239, asparagine 297, asparagine 382, asparagine 460, and asparagine 468. Cysteine 248 and cysteine 329 form a disulfide bridge. Cysteine 500 and cysteine 526 are oxidised to a cystine. An N-linked (GlcNAc...) asparagine glycan is attached at asparagine 554. Cysteine 603 and cysteine 684 are oxidised to a cystine. Threonine 640 is subject to Phosphothreonine. A b region spans residues 692 to 1573 (SYEIFEPPES…PDNIAAWYLR (882 aa)). Sulfotyrosine occurs at positions 693, 724, and 726. Positions 738-1573 (SFRNSSLNQE…PDNIAAWYLR (836 aa)) are cleaved as a propeptide — activation peptide (connecting region). Residues asparagine 741, asparagine 752, asparagine 760, asparagine 776, and asparagine 782 are each glycosylated (N-linked (GlcNAc...) asparagine). O-linked (GalNAc...) threonine glycosylation occurs at threonine 805. Asparagine 821 carries N-linked (GlcNAc...) asparagine glycosylation. Over residues 822 to 831 (SSTAEHSSPY) the composition is skewed to polar residues. The interval 822–842 (SSTAEHSSPYSEDPIEDPLQP) is disordered. Serine 859 is subject to Phosphoserine; by FAM20C. Residues 894-927 (LSQDTGSPSGMRPWEDLPSQDTGSPSRMRPWKDP) are disordered. 2 tandem repeats follow at residues 895–911 (SQDT…EDLP) and 912–928 (SQDT…KDPP). The 2 X 17 AA tandem repeats stretch occupies residues 895-928 (SQDTGSPSGMRPWEDLPSQDTGSPSRMRPWKDPP). Residues asparagine 938 and asparagine 977 are each glycosylated (N-linked (GlcNAc...) asparagine). Disordered stretches follow at residues 982–1001 (WGES…HPKF) and 1029–1048 (TRKK…PRTF). Basic residues predominate over residues 1029–1040 (TRKKKKEKHTHH). 4 N-linked (GlcNAc...) asparagine glycosylation sites follow: asparagine 1074, asparagine 1083, asparagine 1103, and asparagine 1106. The interval 1097-1157 (LPDHNQNSSN…SSSPELSEML (61 aa)) is disordered. The span at 1099-1111 (DHNQNSSNDTGQA) shows a compositional bias: polar residues. Residues 1139 to 1154 (HSTSDPSHRSSSPELS) are compositionally biased toward low complexity. 35 repeat units span residues 1185–1193 (VISPDLSQV), 1194–1202 (TLSPELSQT), 1203–1211 (NLSPDLSHT), 1212–1220 (TLSPELIQR), 1221–1229 (NLSPALGQM), 1230–1238 (PISPDLSHT), 1239–1247 (TLSPDLSHT), 1248–1256 (TLSLDLSQT), 1257–1265 (NLSPELSQT), 1266–1274 (NLSPALGQM), 1275–1283 (PLSPDLSHT), 1284–1292 (TLSLDFSQT), 1293–1301 (NLSPELSHM), 1302–1310 (TLSPELSQT), 1311–1319 (NLSPALGQM), 1320–1328 (PISPDLSHT), 1329–1337 (TLSLDFSQT), 1338–1346 (NLSPELSQT), 1347–1355 (NLSPALGQM), 1356–1364 (PLSPDPSHT), 1365–1373 (TLSLDLSQT), 1374–1382 (NLSPELSQT), 1383–1391 (NLSPDLSEM), 1392–1400 (PLFADLSQI), 1401–1409 (PLTPDLDQM), 1410–1418 (TLSPDLGET), 1419–1427 (DLSPNFGQM), 1428–1436 (SLSPDLSQV), 1437–1445 (TLSPDISDT), 1446–1454 (TLLPDLSQI), 1455–1463 (SPPPDLDQI), 1464–1472 (FYPSESSQS), 1473–1481 (LLLQEFNES), 1482–1490 (FPYPDLGQM), and 1493–1501 (PSSPTLNDT). Positions 1185–1501 (VISPDLSQVT…SPSSPTLNDT (317 aa)) are 35 X 9 AA approximate tandem repeats of [TNP]-L-S-P-D-L-S-Q-T. Positions 1341–1367 (PELSQTNLSPALGQMPLSPDPSHTTLS) are disordered. A glycan (N-linked (GlcNAc...) asparagine) is linked at asparagine 1479. Asparagine 1499 carries an N-linked (GlcNAc...) asparagine glycan. A sulfotyrosine mark is found at tyrosine 1522, tyrosine 1538, and tyrosine 1543. Asparagine 1559 carries an N-linked (GlcNAc...) asparagine glycan. Plastocyanin-like domains lie at 1578-1751 (NRRN…LLIC) and 1761-1907 (NMPM…DRDC). One can recognise an F5/8 type A 3 domain in the interval 1578–1907 (NRRNYYIAAE…TPFLIMDRDC (330 aa)). At tyrosine 1593 the chain carries Sulfotyrosine. Asparagine 1703 carries N-linked (GlcNAc...) asparagine glycosylation. A disulfide bridge links cysteine 1725 with cysteine 1751. Residues histidine 1843 and histidine 1845 each coordinate Cu cation. 2 cysteine pairs are disulfide-bonded: cysteine 1907–cysteine 2061 and cysteine 2066–cysteine 2221. 2 F5/8 type C domains span residues 1907 to 2061 (CRMP…LQGC) and 2066 to 2221 (CSTP…LFGC). 2 N-linked (GlcNAc...) asparagine glycosylation sites follow: asparagine 2010 and asparagine 2209.

Belongs to the multicopper oxidase family. Factor Va, the activated form of factor V, is composed of a heavy chain and a light chain, non-covalently bound. The interaction between the two chains is calcium-dependent. Forms heterodimer with SERPINA5. In terms of processing, thrombin activates factor V proteolytically to the active cofactor, factor Va (formation of a heavy chain at the N-terminus and a light chain at the C-terminus). Sulfation is required for efficient thrombin cleavage and activation and for full procoagulant activity. Post-translationally, activated protein C inactivates factor V and factor Va by proteolytic degradation. In terms of processing, phosphorylated by FAM20C in the extracellular medium. In terms of tissue distribution, plasma.

It is found in the secreted. Inhibited by SERPINA5. Functionally, central regulator of hemostasis. It serves as a critical cofactor for the prothrombinase activity of factor Xa that results in the activation of prothrombin to thrombin. The chain is Coagulation factor V (F5) from Homo sapiens (Human).